A 428-amino-acid chain; its full sequence is Histidinol dehydrogenase (428 aa).

Substrate contacts are provided by Ser-232, Gln-254, and His-257. Zn(2+)-binding residues include Gln-254 and His-257. Active-site proton acceptor residues include Glu-324 and His-325. Substrate contacts are provided by His-325, Asp-358, Glu-412, and His-417. Asp-358 serves as a coordination point for Zn(2+). His-417 contributes to the Zn(2+) binding site.

This sequence belongs to the histidinol dehydrogenase family. It depends on Zn(2+) as a cofactor.

It catalyses the reaction L-histidinol + 2 NAD(+) + H2O = L-histidine + 2 NADH + 3 H(+). It participates in amino-acid biosynthesis; L-histidine biosynthesis; L-histidine from 5-phospho-alpha-D-ribose 1-diphosphate: step 9/9. Its function is as follows. Catalyzes the sequential NAD-dependent oxidations of L-histidinol to L-histidinaldehyde and then to L-histidine. This chain is Histidinol dehydrogenase, found in Thermotoga maritima (strain ATCC 43589 / DSM 3109 / JCM 10099 / NBRC 100826 / MSB8).